We begin with the raw amino-acid sequence, 414 residues long: Na(+)-translocating NADH-quinone reductase subunit B (414 aa).

The next 4 helical transmembrane spans lie at 56–76 (IMIM…YNVG), 82–104 (ALNH…HYWL), 129–149 (FLPI…LFCM), and 164–184 (ILFA…LGIT). FMN phosphoryl threonine is present on T236. A run of 5 helical transmembrane segments spans residues 275–295 (VSTL…IASW), 297–317 (IIAG…VIGS), 325–345 (MPWH…FMAT), 358–378 (WAYG…NPAY), and 381–401 (GMML…HIVI).

The protein belongs to the NqrB/RnfD family. As to quaternary structure, composed of six subunits; NqrA, NqrB, NqrC, NqrD, NqrE and NqrF. Requires FMN as cofactor.

The protein resides in the cell inner membrane. It catalyses the reaction a ubiquinone + n Na(+)(in) + NADH + H(+) = a ubiquinol + n Na(+)(out) + NAD(+). Functionally, NQR complex catalyzes the reduction of ubiquinone-1 to ubiquinol by two successive reactions, coupled with the transport of Na(+) ions from the cytoplasm to the periplasm. NqrA to NqrE are probably involved in the second step, the conversion of ubisemiquinone to ubiquinol. The sequence is that of Na(+)-translocating NADH-quinone reductase subunit B from Vibrio anguillarum (Listonella anguillarum).